The sequence spans 92 residues: RNA-binding protein Hfq (92 aa).

Residues 11–71 (DRFLNHLRVN…ISTIIPSSYV (61 aa)) form the Sm domain.

The protein belongs to the Hfq family. In terms of assembly, homohexamer.

RNA chaperone that binds small regulatory RNA (sRNAs) and mRNAs to facilitate mRNA translational regulation in response to envelope stress, environmental stress and changes in metabolite concentrations. Also binds with high specificity to tRNAs. The chain is RNA-binding protein Hfq from Thermotoga maritima (strain ATCC 43589 / DSM 3109 / JCM 10099 / NBRC 100826 / MSB8).